Here is a 272-residue protein sequence, read N- to C-terminus: NH(3)-dependent NAD(+) synthetase (272 aa).

Residue 43 to 50 (GLSGGQDS) participates in ATP binding. Residue aspartate 49 coordinates Mg(2+). Arginine 138 lines the deamido-NAD(+) pocket. Threonine 158 is a binding site for ATP. A Mg(2+)-binding site is contributed by glutamate 163. Positions 171 and 178 each coordinate deamido-NAD(+). Lysine 187 and threonine 209 together coordinate ATP. 258-259 (HK) contacts deamido-NAD(+).

This sequence belongs to the NAD synthetase family. In terms of assembly, homodimer.

It catalyses the reaction deamido-NAD(+) + NH4(+) + ATP = AMP + diphosphate + NAD(+) + H(+). It participates in cofactor biosynthesis; NAD(+) biosynthesis; NAD(+) from deamido-NAD(+) (ammonia route): step 1/1. Functionally, catalyzes the ATP-dependent amidation of deamido-NAD to form NAD. Uses ammonia as a nitrogen source. The sequence is that of NH(3)-dependent NAD(+) synthetase from Halalkalibacterium halodurans (strain ATCC BAA-125 / DSM 18197 / FERM 7344 / JCM 9153 / C-125) (Bacillus halodurans).